Reading from the N-terminus, the 286-residue chain is Phosphatidylglycerol--prolipoprotein diacylglyceryl transferase (286 aa).

A run of 4 helical transmembrane segments spans residues 25–45, 65–85, 103–123, and 127–147; these read WYAL…RMLL, FILW…VLFY, GGMS…LFGW, and VPIL…LFLG. A 1,2-diacyl-sn-glycero-3-phospho-(1'-sn-glycerol) is bound at residue Arg148. Helical transmembrane passes span 188–208, 212–232, and 248–268; these read AGLE…AGAL, GLII…GEFF, and MGML…ITTW.

It belongs to the Lgt family.

The protein resides in the cell inner membrane. The enzyme catalyses L-cysteinyl-[prolipoprotein] + a 1,2-diacyl-sn-glycero-3-phospho-(1'-sn-glycerol) = an S-1,2-diacyl-sn-glyceryl-L-cysteinyl-[prolipoprotein] + sn-glycerol 1-phosphate + H(+). The protein operates within protein modification; lipoprotein biosynthesis (diacylglyceryl transfer). Catalyzes the transfer of the diacylglyceryl group from phosphatidylglycerol to the sulfhydryl group of the N-terminal cysteine of a prolipoprotein, the first step in the formation of mature lipoproteins. This is Phosphatidylglycerol--prolipoprotein diacylglyceryl transferase from Rhodopseudomonas palustris (strain ATCC BAA-98 / CGA009).